Reading from the N-terminus, the 478-residue chain is Ankyrin repeat and BTB/POZ domain-containing protein 1 (478 aa).

ANK repeat units lie at residues 1 to 31 and 35 to 64; these read MDTS…EVNV and WDST…RCEA. BTB domains follow at residues 115 to 182 and 272 to 346; these read SDVV…DIGV and PDIC…ELPP. Positions 450 to 478 form a coiled coil; the sequence is TVQTYSAIEEAQQQLRALENLLVSIGLDC.

It is found in the cytoplasm. May act as a mediator of the PTEN growth-suppressive signaling pathway. May play a role in developmental processes. The protein is Ankyrin repeat and BTB/POZ domain-containing protein 1 of Rattus norvegicus (Rat).